The primary structure comprises 460 residues: tRNA-splicing endonuclease subunit Sen2 (460 aa).

Positions 143–215 (EKEETPQHEP…SPSSHNGHVA (73 aa)) are disordered. Over residues 159–170 (SSLEGRVEKDEL) the composition is skewed to basic and acidic residues. Residues Tyr364 and His372 contribute to the active site. Residues Ser403, Ser406, and Ser410 each carry the phosphoserine modification. Residue Lys411 is part of the active site.

Belongs to the tRNA-intron endonuclease family. In terms of assembly, tRNA splicing endonuclease is a heterotetramer composed of TSEN2, TSEN15, TSEN34/LENG5 and TSEN54. tRNA splicing endonuclease complex also contains proteins of the pre-mRNA 3'-end processing machinery such as CLP1, CPSF1, CPSF4 and CSTF2.

It is found in the nucleus. The protein resides in the nucleolus. It catalyses the reaction pretRNA = a 3'-half-tRNA molecule with a 5'-OH end + a 5'-half-tRNA molecule with a 2',3'-cyclic phosphate end + an intron with a 2',3'-cyclic phosphate and a 5'-hydroxyl terminus.. Its function is as follows. Constitutes one of the two catalytic subunit of the tRNA-splicing endonuclease complex, a complex responsible for identification and cleavage of the splice sites in pre-tRNA. It cleaves pre-tRNA at the 5'- and 3'-splice sites to release the intron. The products are an intron and two tRNA half-molecules bearing 2',3'-cyclic phosphate and 5'-OH termini. There are no conserved sequences at the splice sites, but the intron is invariably located at the same site in the gene, placing the splice sites an invariant distance from the constant structural features of the tRNA body. Probably carries the active site for 5'-splice site cleavage. The tRNA splicing endonuclease is also involved in mRNA processing via its association with pre-mRNA 3'-end processing factors, establishing a link between pre-tRNA splicing and pre-mRNA 3'-end formation, suggesting that the endonuclease subunits function in multiple RNA-processing events. This Mus musculus (Mouse) protein is tRNA-splicing endonuclease subunit Sen2 (Tsen2).